Here is a 930-residue protein sequence, read N- to C-terminus: Isoleucine--tRNA ligase (930 aa).

The short motif at 57–67 (PYANGNIHVGH) is the 'HIGH' region element. L-isoleucyl-5'-AMP is bound at residue glutamate 554. A 'KMSKS' region motif is present at residues 595–599 (KMSKS). Residue lysine 598 participates in ATP binding.

It belongs to the class-I aminoacyl-tRNA synthetase family. IleS type 1 subfamily. As to quaternary structure, monomer.

The protein resides in the cytoplasm. It carries out the reaction tRNA(Ile) + L-isoleucine + ATP = L-isoleucyl-tRNA(Ile) + AMP + diphosphate. Catalyzes the attachment of isoleucine to tRNA(Ile). As IleRS can inadvertently accommodate and process structurally similar amino acids such as valine, to avoid such errors it has two additional distinct tRNA(Ile)-dependent editing activities. One activity is designated as 'pretransfer' editing and involves the hydrolysis of activated Val-AMP. The other activity is designated 'posttransfer' editing and involves deacylation of mischarged Val-tRNA(Ile). This is Isoleucine--tRNA ligase from Streptococcus agalactiae serotype III (strain NEM316).